The following is a 331-amino-acid chain: Protein Brevis radix-like 1 (331 aa).

The segment at 1–111 (MFTCINCTKM…HQSGRPDSRF (111 aa)) is disordered. Composition is skewed to polar residues over residues 25 to 41 (STTP…TTQI) and 48 to 66 (FSGS…SSNL). A BRX 1 domain is found at 137 to 192 (KEWMAQVEPGVHITFVSLPSGGNDLKRIRFSREVFDKWQAQRWWGENYDRIVELYN). Disordered regions lie at residues 201 to 246 (LQTP…VPHH) and 258 to 279 (TTSS…GEWV). The span at 221–235 (DSARESRDWTQRDNN) shows a compositional bias: basic and acidic residues. The region spanning 276 to 331 (GEWVEEDEPGVYITIRQLPDGTRELRRVRFSRERFGEVHAKTWWEQNRDRIQTQYL) is the BRX 2 domain.

Belongs to the BRX family. As to quaternary structure, heterodimer with BRXL1. Expressed in roots.

The protein localises to the nucleus. May act as a regulator of cell proliferation and elongation in the root. This Arabidopsis thaliana (Mouse-ear cress) protein is Protein Brevis radix-like 1 (BRXL1).